A 521-amino-acid polypeptide reads, in one-letter code: Probable protein kinase UbiB (521 aa).

One can recognise a Protein kinase domain in the interval 119–497 (QFDETPIASA…QKRTNRLLQT (379 aa)). Residues 125–133 (IASASIAQV) and Lys151 each bind ATP. Asp286 (proton acceptor) is an active-site residue. The chain crosses the membrane as a helical span at residues 496 to 516 (QTIIYGGIGFVLGLLAMQLLV).

This sequence belongs to the ABC1 family. UbiB subfamily.

The protein resides in the cell inner membrane. The protein operates within cofactor biosynthesis; ubiquinone biosynthesis [regulation]. Functionally, is probably a protein kinase regulator of UbiI activity which is involved in aerobic coenzyme Q (ubiquinone) biosynthesis. This chain is Probable protein kinase UbiB, found in Variovorax paradoxus (strain S110).